The sequence spans 608 residues: Endo-1,4-beta-xylanase C (608 aa).

The signal sequence occupies residues 1–25 (MKTFSVTKSSVVFAMALGMASTAFA). Residues 40-250 (TITSNQTGKI…VNGEVRGGHM (211 aa)) enclose the GH11 1 domain. Glu-142 (nucleophile) is an active-site residue. The Proton donor role is filled by Glu-237. Residues 263–294 (SDPVSSSSVKSSSSTDAPKSSSSKGNGNVSGK) show a composition bias toward low complexity. The segment at 263–296 (SDPVSSSSVKSSSSTDAPKSSSSKGNGNVSGKID) is disordered. In terms of domain architecture, GH11 2 spans 316–514 (NSSVTGNVGS…GSGSFDVTYF (199 aa)). The active-site Nucleophile is Glu-409. Catalysis depends on Glu-501, which acts as the Proton donor. A disordered region spans residues 520–539 (AHPLAQPEPESSSSEAKVES). Low complexity predominate over residues 527–539 (EPESSSSEAKVES).

It belongs to the glycosyl hydrolase 11 (cellulase G) family.

It catalyses the reaction Endohydrolysis of (1-&gt;4)-beta-D-xylosidic linkages in xylans.. It participates in glycan degradation; xylan degradation. Functionally, cleaves xylans with the production of xylose, xylobiose and xylo-oligosaccharides. The sequence is that of Endo-1,4-beta-xylanase C (xynC) from Fibrobacter succinogenes (strain ATCC 19169 / S85).